The chain runs to 442 residues: 3-phosphoshikimate 1-carboxyvinyltransferase (442 aa).

3-phosphoshikimate is bound by residues Lys-27, Ser-28, and Arg-32. Lys-27 lines the phosphoenolpyruvate pocket. Residues Gly-100 and Arg-128 each coordinate phosphoenolpyruvate. Positions 174, 175, 176, 204, 321, and 348 each coordinate 3-phosphoshikimate. Gln-176 contributes to the phosphoenolpyruvate binding site. Asp-321 (proton acceptor) is an active-site residue. The phosphoenolpyruvate site is built by Arg-352, Arg-394, and Lys-424.

It belongs to the EPSP synthase family. As to quaternary structure, monomer.

The protein resides in the cytoplasm. The catalysed reaction is 3-phosphoshikimate + phosphoenolpyruvate = 5-O-(1-carboxyvinyl)-3-phosphoshikimate + phosphate. It participates in metabolic intermediate biosynthesis; chorismate biosynthesis; chorismate from D-erythrose 4-phosphate and phosphoenolpyruvate: step 6/7. In terms of biological role, catalyzes the transfer of the enolpyruvyl moiety of phosphoenolpyruvate (PEP) to the 5-hydroxyl of shikimate-3-phosphate (S3P) to produce enolpyruvyl shikimate-3-phosphate and inorganic phosphate. This Herminiimonas arsenicoxydans protein is 3-phosphoshikimate 1-carboxyvinyltransferase.